The chain runs to 320 residues: tRNA uridine(34) hydroxylase (320 aa).

Residues 123 to 217 (EDENTVILDA…YGKDPETKGL (95 aa)) enclose the Rhodanese domain. Catalysis depends on C177, which acts as the Cysteine persulfide intermediate.

The protein belongs to the TrhO family.

The enzyme catalyses uridine(34) in tRNA + AH2 + O2 = 5-hydroxyuridine(34) in tRNA + A + H2O. Its function is as follows. Catalyzes oxygen-dependent 5-hydroxyuridine (ho5U) modification at position 34 in tRNAs. This is tRNA uridine(34) hydroxylase from Staphylococcus epidermidis (strain ATCC 35984 / DSM 28319 / BCRC 17069 / CCUG 31568 / BM 3577 / RP62A).